The primary structure comprises 203 residues: METTVLGVQPRIIKKNDAEKIRKSGNVPAVVYHKGEETVAVSVNELELNKLVHTAESHIIDLRFPDGKVKRSFIKAVQFHPVTDRIIHTDFQLFAADEVIEMDVPVSVTGESVGVDKGGKLQILRHNLTLKGKPTDMPDHLVIDITDMEIGSIVHVKDIPAQSYENLEIMIDPETPVVSVVAPKVEVETEEAPEAAAAPEAEA.

Belongs to the bacterial ribosomal protein bL25 family. CTC subfamily. In terms of assembly, part of the 50S ribosomal subunit; part of the 5S rRNA/L5/L18/L25 subcomplex. Contacts the 5S rRNA. Binds to the 5S rRNA independently of L5 and L18.

This is one of the proteins that binds to the 5S RNA in the ribosome where it forms part of the central protuberance. This is Large ribosomal subunit protein bL25 from Chlorobium phaeovibrioides (strain DSM 265 / 1930) (Prosthecochloris vibrioformis (strain DSM 265)).